The primary structure comprises 258 residues: 4-hydroxy-tetrahydrodipicolinate reductase (258 aa).

NAD(+)-binding positions include 9–14, 91–93, and 115–118; these read GASGRM, GTT, and SPNM. The active-site Proton donor/acceptor is the His-148. Residue His-149 participates in (S)-2,3,4,5-tetrahydrodipicolinate binding. Lys-152 functions as the Proton donor in the catalytic mechanism. 158-159 is a (S)-2,3,4,5-tetrahydrodipicolinate binding site; that stretch reads GT.

Belongs to the DapB family.

The protein resides in the cytoplasm. The catalysed reaction is (S)-2,3,4,5-tetrahydrodipicolinate + NAD(+) + H2O = (2S,4S)-4-hydroxy-2,3,4,5-tetrahydrodipicolinate + NADH + H(+). The enzyme catalyses (S)-2,3,4,5-tetrahydrodipicolinate + NADP(+) + H2O = (2S,4S)-4-hydroxy-2,3,4,5-tetrahydrodipicolinate + NADPH + H(+). It functions in the pathway amino-acid biosynthesis; L-lysine biosynthesis via DAP pathway; (S)-tetrahydrodipicolinate from L-aspartate: step 4/4. Its function is as follows. Catalyzes the conversion of 4-hydroxy-tetrahydrodipicolinate (HTPA) to tetrahydrodipicolinate. This is 4-hydroxy-tetrahydrodipicolinate reductase from Lawsonia intracellularis (strain PHE/MN1-00).